Here is a 295-residue protein sequence, read N- to C-terminus: Small ribosomal subunit protein uS2B (295 aa).

S2 bears the N-acetylserine mark. Residues 54–113 (TWEKLLLAARAIVAIENPADVSVISSRNTGQRAVLKFAAATGATPIAGRFTPGTFTNQIQ) form an interaction with PPP1R16B region. Laminin-binding stretches follow at residues 161 to 180 (IPCNNKGAHSVGLMWWMLAR) and 205 to 229 (RDPEEIEKEEQAAAEKAVTKEEFQG). Basic and acidic residues predominate over residues 218–227 (AEKAVTKEEF). Residues 218 to 242 (AEKAVTKEEFQGEWTAPSPEFTATQ) are disordered. [DE]-W-[ST] repeat units follow at residues 230–232 (EWT), 247–249 (DWS), 266–268 (DWS), 275–277 (DWS), and 293–295 (DWS). The segment at 242 to 295 (QPEVADWSEGVQVPSVPIQQFPTEDWSAQPATEDWSAAPTAQATEWVGATTDWS) is laminin-binding. A disordered region spans residues 266–295 (DWSAQPATEDWSAAPTAQATEWVGATTDWS).

Belongs to the universal ribosomal protein uS2 family. As to quaternary structure, monomer (37LRP) and homodimer (67LR). Component of the small ribosomal subunit. Mature ribosomes consist of a small (40S) and a large (60S) subunit. The 40S subunit contains about 33 different proteins and 1 molecule of RNA (18S). The 60S subunit contains about 49 different proteins and 3 molecules of RNA (28S, 5.8S and 5S). Interacts with RPS21. Interacts with several laminins including at least LAMB1. Interacts with MDK. The mature dimeric form interacts with PPP1R16B (via its fourth ankyrin repeat). Interacts with PPP1CA only in the presence of PPP1R16B. Acylated. Acylation may be a prerequisite for conversion of the monomeric 37 kDa laminin receptor precursor (37LRP) to the mature dimeric 67 kDa laminin receptor (67LR), and may provide a mechanism for membrane association. In terms of processing, cleaved by stromelysin-3 (ST3) at the cell surface. Cleavage by stromelysin-3 may be a mechanism to alter cell-extracellular matrix interactions.

The protein localises to the cell membrane. It is found in the cytoplasm. The protein resides in the nucleus. Functionally, required for the assembly and/or stability of the 40S ribosomal subunit. Required for the processing of the 20S rRNA-precursor to mature 18S rRNA in a late step of the maturation of 40S ribosomal subunits. Also functions as a cell surface receptor for laminin. Plays a role in cell adhesion to the basement membrane and in the consequent activation of signaling transduction pathways. May play a role in cell fate determination and tissue morphogenesis. Also acts as a receptor for several other ligands, including the pathogenic prion protein, viruses, and bacteria. Acts as a PPP1R16B-dependent substrate of PPP1CA. This chain is Small ribosomal subunit protein uS2B, found in Homo sapiens (Human).